The following is a 44-amino-acid chain: Photosystem I reaction center subunit IX (44 aa).

Residues 7–27 traverse the membrane as a helical segment; sequence YLSVAPVLSTLWFGSLAGLLI.

Belongs to the PsaJ family.

It localises to the plastid. Its subcellular location is the chloroplast thylakoid membrane. Its function is as follows. May help in the organization of the PsaE and PsaF subunits. The sequence is that of Photosystem I reaction center subunit IX from Fagopyrum esculentum subsp. ancestrale (Wild buckwheat).